The primary structure comprises 601 residues: Sulfite reductase [NADPH] flavoprotein alpha-component (601 aa).

Residues 64-202 (ITLISASQTG…SAQQWRQQIV (139 aa)) form the Flavodoxin-like domain. FMN is bound by residues 70-75 (SQTGNA), 117-120 (STQG), and 153-162 (LGDTSYEHFC). The region spanning 236 to 450 (AAPLTAQLSV…IEHNDNFRLP (215 aa)) is the FAD-binding FR-type domain. FAD is bound by residues threonine 324, lysine 358, 388-391 (RLYS), 406-408 (TVG), tyrosine 412, and 421-424 (GGAS). NADP(+) contacts are provided by residues 521–522 (SR), 527–531 (KIYVQ), and aspartate 563. Tyrosine 601 provides a ligand contact to FAD.

This sequence belongs to the NADPH-dependent sulphite reductase flavoprotein subunit CysJ family. In the N-terminal section; belongs to the flavodoxin family. It in the C-terminal section; belongs to the flavoprotein pyridine nucleotide cytochrome reductase family. As to quaternary structure, alpha(8)-beta(8). The alpha component is a flavoprotein, the beta component is a hemoprotein. The cofactor is FAD. It depends on FMN as a cofactor.

The catalysed reaction is hydrogen sulfide + 3 NADP(+) + 3 H2O = sulfite + 3 NADPH + 4 H(+). The protein operates within sulfur metabolism; hydrogen sulfide biosynthesis; hydrogen sulfide from sulfite (NADPH route): step 1/1. Component of the sulfite reductase complex that catalyzes the 6-electron reduction of sulfite to sulfide. This is one of several activities required for the biosynthesis of L-cysteine from sulfate. The flavoprotein component catalyzes the electron flow from NADPH -&gt; FAD -&gt; FMN to the hemoprotein component. The polypeptide is Sulfite reductase [NADPH] flavoprotein alpha-component (Yersinia enterocolitica serotype O:8 / biotype 1B (strain NCTC 13174 / 8081)).